The chain runs to 76 residues: Large ribosomal subunit protein bL31 (76 aa).

The protein belongs to the bacterial ribosomal protein bL31 family. Type A subfamily. Part of the 50S ribosomal subunit.

Its function is as follows. Binds the 23S rRNA. The sequence is that of Large ribosomal subunit protein bL31 (rpmE) from Pelagibacter ubique (strain HTCC1062).